The sequence spans 204 residues: MVDFILNAQVRSDLGKGASRRLRRNAGLVPAVVYGGDKEPQSVTLELREIAKLLENEAAFSHVIALNVGGAKETVLIKALQRHPAKGFVMHADFLRVVADHKLTAHVPLHFINEEVAVGVKQSGGEISHTISEVEVSCLPKDLPEFIEVDMAKVELGQIVHLSDLKAPKGVELVQLAHGNDLAVANIHASRVVKEEGSEEGAAE.

Ser-123 carries the phosphoserine modification.

The protein belongs to the bacterial ribosomal protein bL25 family. CTC subfamily. In terms of assembly, part of the 50S ribosomal subunit; part of the 5S rRNA/L5/L18/L25 subcomplex. Contacts the 5S rRNA. Binds to the 5S rRNA independently of L5 and L18.

Functionally, this is one of the proteins that binds to the 5S RNA in the ribosome where it forms part of the central protuberance. The protein is Large ribosomal subunit protein bL25 of Pseudomonas aeruginosa (strain UCBPP-PA14).